The chain runs to 334 residues: MAFRVLMVGKGLRALAARGLFDGESLVPVGPAEVDFAGALVAVQRHFPDVVLVDLSALDALPAIEHVMVERPVPVLALHPGVLSGQEAFQAMVAGALDVLERPANPGPEFWTHVSRKLVLLAQVKAVRQVQTRPPPQAAREAKPPPPYPLVAIAASLGGPKAVAQVLRMIPRAFPAPIAYCQHISDGFTEGLAHWLSNETALRVLEAEHDVLMAPGTVYIAPSGSHLLVRPEGRLELDAGPALRGFRPSCDMLLTSAGESFGPRCIGVILTGMGRDGARGLKEIRERGGRTIAQDEASSVVWGMPREAVLMGAAHEVLPLSRIGAALMQWVDVC.

In terms of domain architecture, CheB-type methylesterase spans 147-334 (PYPLVAIAAS…AALMQWVDVC (188 aa)). Active-site residues include serine 156, histidine 183, and aspartate 276.

The enzyme catalyses [protein]-L-glutamate 5-O-methyl ester + H2O = L-glutamyl-[protein] + methanol + H(+). Probable methylesterase. Required for the normal aggregation of M.xanthus cells during fruiting body formation. It is also a component of a sensory transduction pathway that controls the frequency at which cells reverse their gliding direction. It may remove the methyl group from the gamma-glutamyl methyl ester residues in FrzCD. This is Protein-glutamate methylesterase FrzG (frzG) from Myxococcus xanthus.